Consider the following 510-residue polypeptide: Pantetheinase (510 aa).

The first 22 residues, 1 to 22 (MIMSQLLNYVAVLFFCVSRASS), serve as a signal peptide directing secretion. Positions 31–307 (YEHAVILPNA…GKLLLAQLDS (277 aa)) constitute a CN hydrolase domain. Asn-39 is a glycosylation site (N-linked (GlcNAc...) asparagine). The Proton acceptor role is filled by Glu-80. Residues Asn-87 and Asn-147 are each glycosylated (N-linked (GlcNAc...) asparagine). Residue Lys-179 is the Proton donor of the active site. An N-linked (GlcNAc...) asparagine glycan is attached at Asn-201. The active-site Nucleophile is Cys-212. N-linked (GlcNAc...) asparagine glycans are attached at residues Asn-316 and Asn-354. Asp-492 is lipidated: GPI-anchor amidated aspartate. The propeptide at 493 to 510 (LTTQALRLNPKTDAWKSK) is removed in mature form. O-linked (GalNAc...) threonine glycosylation is present at Thr-504.

It belongs to the carbon-nitrogen hydrolase superfamily. BTD/VNN family. Monomer.

It is found in the cell membrane. It carries out the reaction (R)-pantetheine + H2O = cysteamine + (R)-pantothenate. In terms of biological role, amidohydrolase that hydrolyzes specifically one of the carboamide linkages in D-pantetheine thus recycling pantothenic acid (vitamin B5) and releasing cysteamine. This chain is Pantetheinase (VNN1), found in Bos taurus (Bovine).